Reading from the N-terminus, the 500-residue chain is NAD(P)H-quinone oxidoreductase chain 4, chloroplastic (500 aa).

14 consecutive transmembrane segments (helical) span residues phenylalanine 4–leucine 24, tyrosine 35–phenylalanine 55, isoleucine 87–valine 107, phenylalanine 113–serine 130, leucine 134–methionine 154, phenylalanine 167–leucine 187, isoleucine 211–histidine 231, histidine 242–valine 262, alanine 272–alanine 292, isoleucine 305–aspartate 325, glycine 330–glycine 350, leucine 386–threonine 406, isoleucine 416–methionine 436, and leucine 462–valine 482.

The protein belongs to the complex I subunit 4 family.

It localises to the plastid. The protein resides in the chloroplast thylakoid membrane. It carries out the reaction a plastoquinone + NADH + (n+1) H(+)(in) = a plastoquinol + NAD(+) + n H(+)(out). The enzyme catalyses a plastoquinone + NADPH + (n+1) H(+)(in) = a plastoquinol + NADP(+) + n H(+)(out). The polypeptide is NAD(P)H-quinone oxidoreductase chain 4, chloroplastic (Arabis hirsuta (Hairy rock-cress)).